Reading from the N-terminus, the 186-residue chain is Hydra actinoporin-like toxin 6 (186 aa).

Positions 1–21 (MLVYVCLVVILIQLPFGAAGG) are cleaved as a signal peptide. The short motif at 158–160 (RAG) is the Cell attachment site element.

This sequence belongs to the actinoporin family. HALT subfamily. As to quaternary structure, octamer or nonamer in membranes. Monomer in the soluble state. In vitro, interacts with folate receptor alpha (of target organism). In terms of tissue distribution, expressed female germline during oogenesis.

Its subcellular location is the nematocyst. It is found in the secreted. The protein localises to the target cell membrane. Pore-forming protein that forms hydrophilic pores and causes cytolysis. Compared to equinatoxin-2 (AC P61914), it reveals lower cytolysis activity (5-12-fold difference, tested on erythrocytes), a larger pore size (probably 2-3 nm) and different affinity to membrane lipids (100-fold lower affinity to sphingomyelin). Binds to sulfatides. Shows cytolytic activity on HeLa cells, with a different potency than its paralogs (from most potent to less potent: HALT-4&gt;HALT-6~HALT-1&gt;HALT-3&gt;HALT-7&gt;HALT-2). Pore formation is a multi-step process that involves specific recognition of membrane lipid by a protein aromatic residues rich region, firm binding to the membrane (mainly driven by hydrophobic interactions) accompanied by the transfer of the N-terminal region to the lipid-water interface and finally pore formation after oligomerization of monomers. In vitro, binds to the folate receptor alpha (FOLR1), a GPI-anchored membrane protein that plays a major role in the uptake of folate/folic acid into cells via endocytosis, suggesting a possible involvement of this receptor in the mechanism of HALT-1-induced cell lysis. In vivo, does not cause visible paralysis in larvae of the blowfly Sarcophaga faculata, the most common arthropod prey of Hydra. The polypeptide is Hydra actinoporin-like toxin 6 (Hydra vulgaris (Hydra)).